Reading from the N-terminus, the 219-residue chain is Swarming motility regulation protein RssB (219 aa).

One can recognise a Response regulatory domain in the interval 2–116; that stretch reads NILLVEDDLQ…ELISRVKAVN (115 aa). The residue at position 51 (aspartate 51) is a 4-aspartylphosphate. Residues 124–218 constitute a DNA-binding region (ompR/PhoB-type); it reads SQTWSLGALY…VRGIGYLLKK (95 aa).

Its subcellular location is the cytoplasm. Its function is as follows. Member of the two-component regulatory system RssA/RssB involved in regulation of swarming motility which has been shown to be inhibited by saturated fatty acids. RssA/RssB regulates cellular fatty acid composition, hemolysin production and cell surface topography. RssA/RssB negatively regulates the activity of SlhBA. It can also act as a negative regulator for the control of the swarming initiation. RssB binds its own promoter. The sequence is that of Swarming motility regulation protein RssB (rssB) from Serratia marcescens.